Here is a 68-residue protein sequence, read N- to C-terminus: Palustrin-1c (68 aa).

The first 22 residues, methionine 1–cysteine 22, serve as a signal peptide directing secretion. The propeptide occupies glutamate 23–threonine 39. Cysteine 62 and cysteine 68 form a disulfide bridge.

Expressed by the skin glands.

It localises to the secreted. Antimicrobial activity against Gram-negative bacterium E.coli. Stimulates insulin release. This chain is Palustrin-1c, found in Lithobates palustris (Pickerel frog).